A 577-amino-acid polypeptide reads, in one-letter code: Arginine--tRNA ligase (577 aa).

The short motif at 122–132 (PNVAKEMHVGH) is the 'HIGH' region element.

This sequence belongs to the class-I aminoacyl-tRNA synthetase family. As to quaternary structure, monomer.

The protein resides in the cytoplasm. The catalysed reaction is tRNA(Arg) + L-arginine + ATP = L-arginyl-tRNA(Arg) + AMP + diphosphate. This chain is Arginine--tRNA ligase, found in Klebsiella pneumoniae (strain 342).